A 301-amino-acid chain; its full sequence is D-alanine--D-alanine ligase (301 aa).

The 196-residue stretch at 101–296 folds into the ATP-grasp domain; that stretch reads KLMWRAAGLA…YPTLVRRVLE (196 aa). 127–182 provides a ligand contact to ATP; it reads EEELGLPLFVKPAREGSSIGVTKVKERGALKAAYEEAARHDPLVIAEKGVMGGEYT. Mg(2+) is bound by residues Asp-250, Glu-263, and Asn-265.

It belongs to the D-alanine--D-alanine ligase family. The cofactor is Mg(2+). Requires Mn(2+) as cofactor.

Its subcellular location is the cytoplasm. The enzyme catalyses 2 D-alanine + ATP = D-alanyl-D-alanine + ADP + phosphate + H(+). The protein operates within cell wall biogenesis; peptidoglycan biosynthesis. Functionally, cell wall formation. The polypeptide is D-alanine--D-alanine ligase (Dechloromonas aromatica (strain RCB)).